Here is a 37-residue protein sequence, read N- to C-terminus: Large ribosomal subunit protein bL36c (37 aa).

Belongs to the bacterial ribosomal protein bL36 family.

Its subcellular location is the plastid. The protein localises to the chloroplast. This is Large ribosomal subunit protein bL36c from Liriodendron tulipifera (Tuliptree).